Consider the following 114-residue polypeptide: Large ribosomal subunit protein bL19 (114 aa).

This sequence belongs to the bacterial ribosomal protein bL19 family.

Its function is as follows. This protein is located at the 30S-50S ribosomal subunit interface and may play a role in the structure and function of the aminoacyl-tRNA binding site. This chain is Large ribosomal subunit protein bL19, found in Acidithiobacillus ferrooxidans (strain ATCC 23270 / DSM 14882 / CIP 104768 / NCIMB 8455) (Ferrobacillus ferrooxidans (strain ATCC 23270)).